We begin with the raw amino-acid sequence, 515 residues long: Putative ribose/galactose/methyl galactoside import ATP-binding protein (515 aa).

ABC transporter domains lie at 25-261 (LEVL…VGRE) and 268-515 (LREK…SGLN). Residue 57-64 (GENGAGKS) participates in ATP binding.

Belongs to the ABC transporter superfamily. Carbohydrate importer 2 (CUT2) (TC 3.A.1.2) family.

The protein localises to the cell inner membrane. The enzyme catalyses D-ribose(out) + ATP + H2O = D-ribose(in) + ADP + phosphate + H(+). The catalysed reaction is D-galactose(out) + ATP + H2O = D-galactose(in) + ADP + phosphate + H(+). Its function is as follows. Part of an ABC transporter complex involved in carbohydrate import. Could be involved in ribose, galactose and/or methyl galactoside import. Responsible for energy coupling to the transport system. This Pseudomonas fluorescens (strain ATCC BAA-477 / NRRL B-23932 / Pf-5) protein is Putative ribose/galactose/methyl galactoside import ATP-binding protein.